The sequence spans 261 residues: High-affinity zinc uptake system membrane protein ZnuB (261 aa).

The next 7 helical transmembrane spans lie at 8-28, 54-74, 84-104, 125-145, 171-191, 214-234, and 236-256; these read ALLT…FVVW, VNPY…MVWL, TLLG…VGLL, TDLI…IYFW, ILMI…GALI, VGWA…LSAF, and DTAA…LSLF.

Belongs to the ABC-3 integral membrane protein family.

Its subcellular location is the cell inner membrane. Its function is as follows. Involved in the high-affinity zinc uptake transport system. This Haemophilus influenzae (strain ATCC 51907 / DSM 11121 / KW20 / Rd) protein is High-affinity zinc uptake system membrane protein ZnuB (znuB).